A 416-amino-acid polypeptide reads, in one-letter code: Gamma-glutamyl phosphate reductase (416 aa).

Belongs to the gamma-glutamyl phosphate reductase family.

It is found in the cytoplasm. It catalyses the reaction L-glutamate 5-semialdehyde + phosphate + NADP(+) = L-glutamyl 5-phosphate + NADPH + H(+). Its pathway is amino-acid biosynthesis; L-proline biosynthesis; L-glutamate 5-semialdehyde from L-glutamate: step 2/2. Its function is as follows. Catalyzes the NADPH-dependent reduction of L-glutamate 5-phosphate into L-glutamate 5-semialdehyde and phosphate. The product spontaneously undergoes cyclization to form 1-pyrroline-5-carboxylate. The chain is Gamma-glutamyl phosphate reductase from Salmonella paratyphi A (strain AKU_12601).